A 467-amino-acid polypeptide reads, in one-letter code: Chromosomal replication initiator protein DnaA (467 aa).

A domain I, interacts with DnaA modulators region spans residues 1–90 (MSLSLWQQCL…KPVTQTPQAA (90 aa)). The tract at residues 91–130 (VTSNVAAPAQVAQTQPQRAAPSTRSGWDNVPAPAEPTYRS) is domain II. Residues 98-111 (PAQVAQTQPQRAAP) show a composition bias toward low complexity. Positions 98–119 (PAQVAQTQPQRAAPSTRSGWDN) are disordered. Positions 131-347 (NVNVKHTFDN…GALNRVIANA (217 aa)) are domain III, AAA+ region. Gly175, Gly177, Lys178, and Thr179 together coordinate ATP. A domain IV, binds dsDNA region spans residues 348 to 467 (NFTGRAITID…FSNLIRTLSS (120 aa)).

This sequence belongs to the DnaA family. In terms of assembly, oligomerizes as a right-handed, spiral filament on DNA at oriC.

It is found in the cytoplasm. In terms of biological role, plays an essential role in the initiation and regulation of chromosomal replication. ATP-DnaA binds to the origin of replication (oriC) to initiate formation of the DNA replication initiation complex once per cell cycle. Binds the DnaA box (a 9 base pair repeat at the origin) and separates the double-stranded (ds)DNA. Forms a right-handed helical filament on oriC DNA; dsDNA binds to the exterior of the filament while single-stranded (ss)DNA is stabiized in the filament's interior. The ATP-DnaA-oriC complex binds and stabilizes one strand of the AT-rich DNA unwinding element (DUE), permitting loading of DNA polymerase. After initiation quickly degrades to an ADP-DnaA complex that is not apt for DNA replication. Binds acidic phospholipids. The sequence is that of Chromosomal replication initiator protein DnaA from Shigella sonnei (strain Ss046).